A 507-amino-acid chain; its full sequence is Ribose import ATP-binding protein RbsA 2 (507 aa).

2 consecutive ABC transporter domains span residues 7–245 and 249–498; these read FSLD…VGRN and LFTR…MPQS. 39-46 contacts ATP; that stretch reads GENGAGKS.

Belongs to the ABC transporter superfamily. Ribose importer (TC 3.A.1.2.1) family. In terms of assembly, the complex is composed of an ATP-binding protein (RbsA), two transmembrane proteins (RbsC) and a solute-binding protein (RbsB).

It localises to the cell inner membrane. The enzyme catalyses D-ribose(out) + ATP + H2O = D-ribose(in) + ADP + phosphate + H(+). Its function is as follows. Part of the ABC transporter complex RbsABC involved in ribose import. Responsible for energy coupling to the transport system. This is Ribose import ATP-binding protein RbsA 2 from Mesorhizobium japonicum (strain LMG 29417 / CECT 9101 / MAFF 303099) (Mesorhizobium loti (strain MAFF 303099)).